A 347-amino-acid polypeptide reads, in one-letter code: Gentisate 1,2 dioxygenase 1 (347 aa).

In terms of domain architecture, Cupin type-2 spans 96 to 163 (LQLILPGEVA…DSDKPMIWMD (68 aa)).

It belongs to the gentisate 1,2-dioxygenase family. As to quaternary structure, homotetramer. It depends on Fe(2+) as a cofactor.

The catalysed reaction is 2,5-dihydroxybenzoate + O2 = 3-maleylpyruvate + H(+). With respect to regulation, completely inhibited by the presence of 5 mM Cu(2+). Partially inhibited with 5 mM Mn(2+), Zn(2+) or EDTA. Functionally, involved in the degradation of gentisate. Catalyzes the conversion of gentisate (2,5-dihydroxybenzoate) to maleylpyruvate. Exhibits broad substrate specificities towards alkyl and halogenated gentisates. The chain is Gentisate 1,2 dioxygenase 1 from Aquipseudomonas alcaligenes (Pseudomonas alcaligenes).